Here is a 607-residue protein sequence, read N- to C-terminus: Pogo transposable element with KRAB domain (607 aa).

Residues 8–29 (LNLTLKEEQKEEEVEIQELEDG) are a coiled coil. A Glycyl lysine isopeptide (Lys-Gly) (interchain with G-Cter in SUMO2) cross-link involves residue Lys13. Residues 47-118 (ALFDEVAIYF…DEWRLQGVTF (72 aa)) form the KRAB domain. The region spanning 250-323 (AFRGPKNGRF…MRRYDLSLRH (74 aa)) is the HTH CENPB-type domain. Positions 355–567 (YEVAQMGNAD…ISSESIVQGF (213 aa)) constitute a DDE-1 domain. A Glycyl lysine isopeptide (Lys-Gly) (interchain with G-Cter in SUMO2) cross-link involves residue Lys384. The segment at 588 to 607 (GELPKEPPKECGPESVAEGD) is disordered. The segment covering 589–599 (ELPKEPPKECG) has biased composition (basic and acidic residues).

It localises to the nucleus. This Mus musculus (Mouse) protein is Pogo transposable element with KRAB domain (Pogk).